A 650-amino-acid polypeptide reads, in one-letter code: Chaperone protein DnaK (650 aa).

Phosphothreonine; by autocatalysis is present on Thr-200. Residues 613 to 634 (QAGAAGAAGAAEGAAHAGGAQQ) form a disordered region.

This sequence belongs to the heat shock protein 70 family.

Its function is as follows. Acts as a chaperone. This is Chaperone protein DnaK from Burkholderia vietnamiensis (strain G4 / LMG 22486) (Burkholderia cepacia (strain R1808)).